A 185-amino-acid polypeptide reads, in one-letter code: ATP synthase subunit b, chloroplastic (185 aa).

The helical transmembrane segment at 31-53 (IINITVVLGILIYFGKGVLSNLL) threads the bilayer.

This sequence belongs to the ATPase B chain family. As to quaternary structure, F-type ATPases have 2 components, F(1) - the catalytic core - and F(0) - the membrane proton channel. F(1) has five subunits: alpha(3), beta(3), gamma(1), delta(1), epsilon(1). F(0) has four main subunits: a(1), b(1), b'(1) and c(10-14). The alpha and beta chains form an alternating ring which encloses part of the gamma chain. F(1) is attached to F(0) by a central stalk formed by the gamma and epsilon chains, while a peripheral stalk is formed by the delta, b and b' chains.

The protein localises to the plastid. It localises to the chloroplast thylakoid membrane. Its function is as follows. F(1)F(0) ATP synthase produces ATP from ADP in the presence of a proton or sodium gradient. F-type ATPases consist of two structural domains, F(1) containing the extramembraneous catalytic core and F(0) containing the membrane proton channel, linked together by a central stalk and a peripheral stalk. During catalysis, ATP synthesis in the catalytic domain of F(1) is coupled via a rotary mechanism of the central stalk subunits to proton translocation. In terms of biological role, component of the F(0) channel, it forms part of the peripheral stalk, linking F(1) to F(0). This chain is ATP synthase subunit b, chloroplastic, found in Gnetum parvifolium (Small-leaved jointfir).